We begin with the raw amino-acid sequence, 279 residues long: Acyl-[acyl-carrier-protein]--UDP-N-acetylglucosamine O-acyltransferase (279 aa).

The tract at residues 256–279 (IERGADKDALQDESVEKEGALVES) is disordered.

It belongs to the transferase hexapeptide repeat family. LpxA subfamily. Homotrimer.

It localises to the cytoplasm. It carries out the reaction a (3R)-hydroxyacyl-[ACP] + UDP-N-acetyl-alpha-D-glucosamine = a UDP-3-O-[(3R)-3-hydroxyacyl]-N-acetyl-alpha-D-glucosamine + holo-[ACP]. It functions in the pathway glycolipid biosynthesis; lipid IV(A) biosynthesis; lipid IV(A) from (3R)-3-hydroxytetradecanoyl-[acyl-carrier-protein] and UDP-N-acetyl-alpha-D-glucosamine: step 1/6. Its function is as follows. Involved in the biosynthesis of lipid A, a phosphorylated glycolipid that anchors the lipopolysaccharide to the outer membrane of the cell. This Chlamydia caviae (strain ATCC VR-813 / DSM 19441 / 03DC25 / GPIC) (Chlamydophila caviae) protein is Acyl-[acyl-carrier-protein]--UDP-N-acetylglucosamine O-acyltransferase.